A 233-amino-acid polypeptide reads, in one-letter code: Ribonuclease 3 (233 aa).

The RNase III domain occupies 6–135; the sequence is QDYLAKEFNI…FIGALYLDQG (130 aa). E48 serves as a coordination point for Mg(2+). D52 is a catalytic residue. Residues D121 and E124 each coordinate Mg(2+). The active site involves E124. The region spanning 161-230 is the DRBM domain; that stretch reads DAKTSLQEFL…AQQALDNMRN (70 aa). The interval 205–233 is disordered; sequence IGEGKGSSKKHAEMQAAQQALDNMRNKNK.

It belongs to the ribonuclease III family. Homodimer. Mg(2+) serves as cofactor.

It is found in the cytoplasm. It catalyses the reaction Endonucleolytic cleavage to 5'-phosphomonoester.. Functionally, digests double-stranded RNA. Involved in the processing of primary rRNA transcript to yield the immediate precursors to the large and small rRNAs (23S and 16S). Processes some mRNAs, and tRNAs when they are encoded in the rRNA operon. Processes pre-crRNA and tracrRNA of type II CRISPR loci if present in the organism. This is Ribonuclease 3 from Limosilactobacillus reuteri (strain DSM 20016) (Lactobacillus reuteri).